Here is a 37-residue protein sequence, read N- to C-terminus: Chitinase-like protein (37 aa).

A disordered region spans residues Val1 to Gly20. The GH18 domain occupies Val1–Thr37.

It belongs to the glycosyl hydrolase 18 family. IDGF subfamily. Post-translationally, glycosylated.

Its subcellular location is the secreted. Cooperates with insulin-like peptides to stimulate the proliferation, polarization and motility of imaginal disk cells. May act by stabilizing the binding of insulin-like peptides to its receptor through a simultaneous interaction with both molecules to form a multiprotein signaling complex. The chain is Chitinase-like protein from Heliothis virescens (Tobacco budworm moth).